We begin with the raw amino-acid sequence, 189 residues long: Molybdopterin synthase catalytic subunit (189 aa).

Serine 20 bears the Phosphoserine mark. Substrate contacts are provided by residues 143–144 (HR), lysine 159, and 166–168 (KKE).

The protein belongs to the MoaE family. MOCS2B subfamily. In terms of assembly, heterotetramer; composed of 2 small (MOCS2A) and 2 large (MOCS2B) subunits.

The protein resides in the cytoplasm. Its subcellular location is the cytosol. The enzyme catalyses 2 [molybdopterin-synthase sulfur-carrier protein]-C-terminal-Gly-aminoethanethioate + cyclic pyranopterin phosphate + H2O = molybdopterin + 2 [molybdopterin-synthase sulfur-carrier protein]-C-terminal Gly-Gly + 2 H(+). It functions in the pathway cofactor biosynthesis; molybdopterin biosynthesis. In terms of biological role, catalytic subunit of the molybdopterin synthase complex, a complex that catalyzes the conversion of precursor Z into molybdopterin. Acts by mediating the incorporation of 2 sulfur atoms from thiocarboxylated MOCS2A into precursor Z to generate a dithiolene group. The protein is Molybdopterin synthase catalytic subunit of Bos taurus (Bovine).